The following is a 159-amino-acid chain: Mediator of RNA polymerase II transcription subunit 10 (159 aa).

The segment at Ser-54–Leu-77 is disordered.

This sequence belongs to the Mediator complex subunit 10 family. Component of the Mediator complex.

The protein localises to the nucleus. In terms of biological role, component of the Mediator complex, a coactivator involved in the regulated transcription of nearly all RNA polymerase II-dependent genes. Mediator functions as a bridge to convey information from gene-specific regulatory proteins to the basal RNA polymerase II transcription machinery. Mediator is recruited to promoters by direct interactions with regulatory proteins and serves as a scaffold for the assembly of a functional preinitiation complex with RNA polymerase II and the general transcription factors. In Aspergillus fumigatus (strain ATCC MYA-4609 / CBS 101355 / FGSC A1100 / Af293) (Neosartorya fumigata), this protein is Mediator of RNA polymerase II transcription subunit 10 (nut2).